Reading from the N-terminus, the 453-residue chain is Dihydrolipoyllysine-residue succinyltransferase component of 2-oxoglutarate dehydrogenase complex, mitochondrial (453 aa).

The transit peptide at 1–67 (MLSRSRCVSR…RFFRTTAVCK (67 aa)) directs the protein to the mitochondrion. The region spanning 70–144 (LVTVKTPAFA…EGGTPLFTLR (75 aa)) is the Lipoyl-binding domain. Position 81 is a phosphoserine (Ser-81). Lys-110 bears the N6-lipoyllysine mark. Residues 152 to 172 (KAKPAEAPAAAAPKAEPTAAA) are compositionally biased toward low complexity. The disordered stretch occupies residues 152–225 (KAKPAEAPAA…GKGLRSEHRE (74 aa)). An N6-acetyllysine modification is found at Lys-154. A compositionally biased stretch (pro residues) spans 173-196 (VPPPAAPIPTQMPPVPSPSQPPSG). Lys-267, Lys-272, Lys-273, Lys-277, and Lys-307 each carry N6-acetyllysine. Active-site residues include His-424 and Asp-428.

It belongs to the 2-oxoacid dehydrogenase family. In terms of assembly, the 2-oxoglutarate dehydrogenase complex is composed of OGDH (2-oxoglutarate dehydrogenase; E1), DLST (dihydrolipoamide succinyltransferase; E2), DLD (dihydrolipoamide dehydrogenase; E3) and the assembly factor KGD4. It contains multiple copies of the three enzymatic components (E1, E2 and E3). In the nucleus, the 2-oxoglutarate dehydrogenase complex associates with KAT2A. Interacts with ABHD11; this interaction maintains the functional lipoylation of the 2-oxoglutarate dehydrogenase complex. (R)-lipoate is required as a cofactor.

The protein localises to the mitochondrion matrix. Its subcellular location is the nucleus. It catalyses the reaction N(6)-[(R)-dihydrolipoyl]-L-lysyl-[protein] + succinyl-CoA = N(6)-[(R)-S(8)-succinyldihydrolipoyl]-L-lysyl-[protein] + CoA. It functions in the pathway amino-acid degradation; L-lysine degradation via saccharopine pathway; glutaryl-CoA from L-lysine: step 6/6. It participates in carbohydrate metabolism; tricarboxylic acid cycle. Functionally, dihydrolipoamide succinyltransferase (E2) component of the 2-oxoglutarate dehydrogenase complex. The 2-oxoglutarate dehydrogenase complex catalyzes the overall conversion of 2-oxoglutarate to succinyl-CoA and CO(2). The 2-oxoglutarate dehydrogenase complex is mainly active in the mitochondrion. A fraction of the 2-oxoglutarate dehydrogenase complex also localizes in the nucleus and is required for lysine succinylation of histones: associates with KAT2A on chromatin and provides succinyl-CoA to histone succinyltransferase KAT2A. In Homo sapiens (Human), this protein is Dihydrolipoyllysine-residue succinyltransferase component of 2-oxoglutarate dehydrogenase complex, mitochondrial.